The following is a 200-amino-acid chain: NADH-quinone oxidoreductase subunit B (200 aa).

[4Fe-4S] cluster-binding residues include Cys-78, Cys-79, Cys-144, and Cys-174.

It belongs to the complex I 20 kDa subunit family. In terms of assembly, NDH-1 is composed of 14 different subunits. Subunits NuoB, C, D, E, F, and G constitute the peripheral sector of the complex. It depends on [4Fe-4S] cluster as a cofactor.

The protein resides in the cell membrane. It catalyses the reaction a quinone + NADH + 5 H(+)(in) = a quinol + NAD(+) + 4 H(+)(out). Functionally, NDH-1 shuttles electrons from NADH, via FMN and iron-sulfur (Fe-S) centers, to quinones in the respiratory chain. The immediate electron acceptor for the enzyme in this species is believed to be ubiquinone. Couples the redox reaction to proton translocation (for every two electrons transferred, four hydrogen ions are translocated across the cytoplasmic membrane), and thus conserves the redox energy in a proton gradient. The chain is NADH-quinone oxidoreductase subunit B from Dehalococcoides mccartyi (strain ATCC BAA-2266 / KCTC 15142 / 195) (Dehalococcoides ethenogenes (strain 195)).